We begin with the raw amino-acid sequence, 30 residues long: MDRETEAETAELVTESLVEEVSIDGMCGVY.

The protein belongs to the mycofactocin precursor peptide family. Interacts with MftB. In terms of processing, the post-translational modifications that lead to mycofactocin involve oxidative decarboxylation of the C-terminal tyrosine residue catalyzed by MftC, introduction of a tyramine-valine cross-link, removal of the modified C-terminal dipeptide by MftE. The released dipeptide then undergoes oxidative deamination by MftD, glycosylation by MftF and methylation by an unknown enzyme.

Precursor peptide that leads to mycofactocin (MFT) after extensive post-translational modifications by enzymes encoded by adjacent genes. Mycofactocin acts as a redox cofactor of nicotinamide-dependent oxidoreductases encoded in the same locus. The protein is Mycofactocin precursor peptide of Mycobacterium ulcerans (strain Agy99).